A 308-amino-acid polypeptide reads, in one-letter code: Porphobilinogen deaminase (308 aa).

Cysteine 240 carries the post-translational modification S-(dipyrrolylmethanemethyl)cysteine.

Belongs to the HMBS family. In terms of assembly, monomer. Dipyrromethane serves as cofactor.

It carries out the reaction 4 porphobilinogen + H2O = hydroxymethylbilane + 4 NH4(+). Its pathway is porphyrin-containing compound metabolism; protoporphyrin-IX biosynthesis; coproporphyrinogen-III from 5-aminolevulinate: step 2/4. Functionally, tetrapolymerization of the monopyrrole PBG into the hydroxymethylbilane pre-uroporphyrinogen in several discrete steps. The protein is Porphobilinogen deaminase of Laribacter hongkongensis (strain HLHK9).